Here is a 55-residue protein sequence, read N- to C-terminus: Regulatory protein MokB (55 aa).

Its function is as follows. Overlapping regulatory peptide whose translation enables hokB expression. In Escherichia coli (strain K12), this protein is Regulatory protein MokB (mokB).